Consider the following 535-residue polypeptide: cAMP-regulated D2 protein (535 aa).

The first 20 residues, 1–20 (MNKLLVFILLLLLLINISFA), serve as a signal peptide directing secretion. Residues C89 and C109 are joined by a disulfide bond. The active-site Acyl-ester intermediate is the S213. Cysteines 265 and 272 form a disulfide. Catalysis depends on charge relay system residues E338 and H440. A glycan (N-linked (GlcNAc...) asparagine) is linked at N500.

Belongs to the type-B carboxylesterase/lipase family.

It localises to the cytoplasmic vesicle. The protein resides in the esterosome membrane. This is cAMP-regulated D2 protein (D2) from Dictyostelium discoideum (Social amoeba).